A 109-amino-acid chain; its full sequence is Small ribosomal subunit protein bS6 (109 aa).

This sequence belongs to the bacterial ribosomal protein bS6 family.

Functionally, binds together with bS18 to 16S ribosomal RNA. The protein is Small ribosomal subunit protein bS6 of Ehrlichia chaffeensis (strain ATCC CRL-10679 / Arkansas).